Consider the following 835-residue polypeptide: Microcephalin (835 aa).

One can recognise a BRCT 1 domain in the interval 1-93 (MAAPILKDVV…AHIDESLFPA (93 aa)). Phosphoserine occurs at positions 279, 287, 296, and 333. 2 disordered regions span residues 332-376 (LSPT…RKRS) and 417-442 (SPDNLKERNSENLPPESQLPSSPAQF). Threonine 335 carries the post-translational modification Phosphothreonine. A compositionally biased stretch (basic residues) spans 343–361 (LLIHSRPRSSSVKRKRVSH). Serine 548 is modified (phosphoserine). Residues 555-583 (AVDLKSTQNKGTTSKISNSSEGEAQSEHE) form a disordered region. Residues 559–577 (KSTQNKGTTSKISNSSEGE) show a composition bias toward polar residues. BRCT domains lie at 640 to 730 (SGRG…PFEL) and 751 to 833 (YRGT…NYLL).

As to quaternary structure, interacts with CDC27 and maybe other components of the APC/C complex. Interacts with histone variant H2AX under DNA damage conditions.

The protein resides in the cytoplasm. The protein localises to the cytoskeleton. It is found in the microtubule organizing center. Its subcellular location is the centrosome. Its function is as follows. Implicated in chromosome condensation and DNA damage induced cellular responses. May play a role in neurogenesis and regulation of the size of the cerebral cortex. The sequence is that of Microcephalin from Pan troglodytes (Chimpanzee).